The following is a 423-amino-acid chain: D-tagatose-1,6-bisphosphate aldolase subunit GatZ (423 aa).

Belongs to the GatZ/KbaZ family. GatZ subfamily. As to quaternary structure, forms a complex with GatY.

The protein operates within carbohydrate metabolism; D-tagatose 6-phosphate degradation; D-glyceraldehyde 3-phosphate and glycerone phosphate from D-tagatose 6-phosphate: step 2/2. In terms of biological role, component of the tagatose-1,6-bisphosphate aldolase GatYZ that is required for full activity and stability of the Y subunit. Could have a chaperone-like function for the proper and stable folding of GatY. When expressed alone, GatZ does not show any aldolase activity. Is involved in the catabolism of galactitol. The polypeptide is D-tagatose-1,6-bisphosphate aldolase subunit GatZ (Salmonella dublin (strain CT_02021853)).